We begin with the raw amino-acid sequence, 426 residues long: Mediator of RNA polymerase II transcription subunit 4 (426 aa).

Residues 1–56 (MLQHQIVQSPARLGLTGPGSPSVQNPTPTRHGHPTSSSSSQSQHQQIQQQPNLLPS) are disordered. Residues 19–28 (GSPSVQNPTP) show a composition bias toward polar residues. The span at 36 to 56 (SSSSSQSQHQQIQQQPNLLPS) shows a compositional bias: low complexity. A coiled-coil region spans residues 160-212 (TELQEILDLQDAKQKVAREIKSKDSSLLAFANKLKDAERVLDMLVDDYSDYRK). Disordered stretches follow at residues 214–236 (KRSKIEEDDEDNDNESSSSSTTV) and 373–426 (IAAP…DDED). Positions 406–426 (ILEDDDSSDYSSDDASSDDED) are enriched in acidic residues.

Belongs to the Mediator complex subunit 4 family. Component of the Mediator complex.

The protein resides in the nucleus. In terms of biological role, component of the Mediator complex, a coactivator involved in the regulated transcription of nearly all RNA polymerase II-dependent genes. Mediator functions as a bridge to convey information from gene-specific regulatory proteins to the basal RNA polymerase II transcription machinery. The Mediator complex, having a compact conformation in its free form, is recruited to promoters by direct interactions with regulatory proteins and serves for the assembly of a functional preinitiation complex with RNA polymerase II and the general transcription factors. This Arabidopsis thaliana (Mouse-ear cress) protein is Mediator of RNA polymerase II transcription subunit 4 (MED4).